Here is a 434-residue protein sequence, read N- to C-terminus: Rubisco accumulation factor 1.1, chloroplastic (434 aa).

The transit peptide at M1–K51 directs the protein to the chloroplast. Residues I65–L254 form an N-terminal alpha-helix region. The interval V273–P419 is C-terminal beta sheet.

The protein belongs to the RAF family. As to quaternary structure, homodimer.

It is found in the plastid. The protein resides in the chloroplast. Its function is as follows. Required for assembly or stability of RuBisCO. Acts at a postchaperonin step to fold and/or assemble the large subunit (rbcL) into RuBisCO. RAF1 binds first to a rbcL dimer (rbcL(2)), leading to a rbcL(8)-RAF1(4) complex formation. In the next step, RBCS displaces RAF1, thus resulting in holoenzyme formation. This is Rubisco accumulation factor 1.1, chloroplastic from Arabidopsis thaliana (Mouse-ear cress).